The primary structure comprises 258 residues: MLIVVSPAKTLDYESPLVTHKFTQPELVDYSKQLIEVCRQLTPADVASLMKVSDKIADLNVGRFQEWSEEFTPDNARQAILAFKGDVYTGLEAETLNDDDFDYAQKHLRMLSGLYGLLKPLDLMQPYRLEMGTKLANPKGSNLYQFWGNVITEKLNEAIAAQGDNVLINLASNEYFKAVKPKALDAQVITPIFKDAKNGQYKVISFFAKKARGMMARYIIENRISSVADLTQFDSAGYYFVEEESTPTELVFKREEQH.

The protein belongs to the UPF0246 family.

This Vibrio vulnificus (strain YJ016) protein is UPF0246 protein VV0659.